A 141-amino-acid chain; its full sequence is MAVQRTFSIIKPDAVAKNVIGKITTRFEEAGLKIVASKIKQLSKAEAEGFYAEHSARGFFGDLVAFMTSGPVVVQVLEGENAIALNRELMGATNPKEAAAGTIRADFAESIDANAVHGSDSEAAAAREIAYFFAATEVTTR.

Positions 11, 59, 87, 93, 104, and 114 each coordinate ATP. H117 acts as the Pros-phosphohistidine intermediate in catalysis.

The protein belongs to the NDK family. In terms of assembly, homotetramer. Requires Mg(2+) as cofactor.

The protein localises to the cytoplasm. It carries out the reaction a 2'-deoxyribonucleoside 5'-diphosphate + ATP = a 2'-deoxyribonucleoside 5'-triphosphate + ADP. The catalysed reaction is a ribonucleoside 5'-diphosphate + ATP = a ribonucleoside 5'-triphosphate + ADP. Major role in the synthesis of nucleoside triphosphates other than ATP. The ATP gamma phosphate is transferred to the NDP beta phosphate via a ping-pong mechanism, using a phosphorylated active-site intermediate. This is Nucleoside diphosphate kinase from Pseudomonas putida (strain GB-1).